The primary structure comprises 487 residues: Protein translocase subunit SecY (487 aa).

Residues 1–20 lie on the Cytoplasmic side of the membrane; sequence MSWKDTAEPLLVRMPAVQRP. Residues 21–47 traverse the membrane as a helical segment; it reads EGHVPFKRKLTWTGGVLLLYFFLTNVK. Topologically, residues 48–59 are extracellular; the sequence is LFGLDIDASQQV. Residues 60–67 constitute an intramembrane region (helical); sequence FGRFSSIL. A discontinuously helical membrane pass occupies residues 60 to 88; that stretch reads FGRFSSILASGQGSIMQLGIGPIVTASIV. An intramembrane segment occupies 68–79; that stretch reads ASGQGSIMQLGI. Positions 80–88 form an intramembrane region, helical; it reads GPIVTASIV. The Cytoplasmic segment spans residues 89–110; sequence LQLLGGADLLGLNTQDDPRDQI. A helical membrane pass occupies residues 111–135; it reads LYQGLQKLLVLVMICLTGLPMVFAG. Over 136 to 153 the chain is Extracellular; the sequence is GFLPADTAVANSLGIGTA. A helical membrane pass occupies residues 154–178; it reads GVQWLIFAQMFVGGVLILFMDEVIS. The Cytoplasmic portion of the chain corresponds to 179 to 184; it reads KWGVGS. The helical transmembrane segment at 185-203 threads the bilayer; the sequence is GIGLFIVAGVSQRLVGGLL. Residues 204–244 are Extracellular-facing; the sequence is TAPFLGNSEGIIYTWYLFITGERGTGPVLAADGLQTVLLQG. A helical membrane pass occupies residues 245 to 266; that stretch reads ELLGLFTTVLIFAVVVYAESVR. Residues 267-291 lie on the Cytoplasmic side of the membrane; that stretch reads VEIPLSNARVKGARGRFPVKLIYAS. The chain crosses the membrane as a helical span at residues 292-313; that stretch reads VLPMILVRALQANIQFLGRILN. Residues 314–364 lie on the Extracellular side of the membrane; the sequence is AQLGSMPAFLGTYANGQPTGGLFYFLAPIQSRGDWMWWLEGTAQPVWQILT. Residues 365 to 384 traverse the membrane as a helical segment; sequence RVGIDLFVMLVGGAVFAVFW. The Cytoplasmic segment spans residues 385–427; it reads VETTDMGPEATAKQIHNSGMQIPGFRQNVGVIEKVLERYIPQV. The helical transmembrane segment at 428-446 threads the bilayer; the sequence is TVIGGALVGLLAVMANMLG. Topologically, residues 447–451 are extracellular; it reads TIGGV. The helical transmembrane segment at 452 to 466 threads the bilayer; that stretch reads SGTGLLLTVSITYKL. Residues 467 to 487 are Cytoplasmic-facing; it reads YEEIAEEQLMEMHPMMRQMFG.

The protein belongs to the SecY/SEC61-alpha family. As to quaternary structure, component of the Sec protein translocase complex. Heterotrimer consisting of alpha (SecY), beta (SecG) and gamma (SecE) subunits. The heterotrimers can form oligomers, although 1 heterotrimer is thought to be able to translocate proteins. Interacts with the ribosome. May interact with SecDF, and other proteins may be involved.

It localises to the cell membrane. Its function is as follows. The central subunit of the protein translocation channel SecYEG. Consists of two halves formed by TMs 1-5 and 6-10. These two domains form a lateral gate at the front which open onto the bilayer between TMs 2 and 7, and are clamped together by SecE at the back. The channel is closed by both a pore ring composed of hydrophobic SecY resides and a short helix (helix 2A) on the extracellular side of the membrane which forms a plug. The plug probably moves laterally to allow the channel to open. The ring and the pore may move independently. This chain is Protein translocase subunit SecY, found in Haloarcula marismortui (strain ATCC 43049 / DSM 3752 / JCM 8966 / VKM B-1809) (Halobacterium marismortui).